A 134-amino-acid polypeptide reads, in one-letter code: Phosphoribosyl-ATP pyrophosphatase 2 (134 aa).

It belongs to the PRA-PH family.

The protein localises to the cytoplasm. The catalysed reaction is 1-(5-phospho-beta-D-ribosyl)-ATP + H2O = 1-(5-phospho-beta-D-ribosyl)-5'-AMP + diphosphate + H(+). It functions in the pathway amino-acid biosynthesis; L-histidine biosynthesis; L-histidine from 5-phospho-alpha-D-ribose 1-diphosphate: step 2/9. The chain is Phosphoribosyl-ATP pyrophosphatase 2 (hisE2) from Bradyrhizobium diazoefficiens (strain JCM 10833 / BCRC 13528 / IAM 13628 / NBRC 14792 / USDA 110).